A 370-amino-acid polypeptide reads, in one-letter code: 3-isopropylmalate dehydrogenase (370 aa).

Positions 99, 109, 137, and 227 each coordinate substrate. Positions 227, 251, and 255 each coordinate Mg(2+). 290–302 (GSAPDIAGQDKAN) lines the NAD(+) pocket.

This sequence belongs to the isocitrate and isopropylmalate dehydrogenases family. LeuB type 1 subfamily. In terms of assembly, homodimer. Mg(2+) serves as cofactor. It depends on Mn(2+) as a cofactor.

The protein resides in the cytoplasm. The enzyme catalyses (2R,3S)-3-isopropylmalate + NAD(+) = 4-methyl-2-oxopentanoate + CO2 + NADH. Its pathway is amino-acid biosynthesis; L-leucine biosynthesis; L-leucine from 3-methyl-2-oxobutanoate: step 3/4. Its function is as follows. Catalyzes the oxidation of 3-carboxy-2-hydroxy-4-methylpentanoate (3-isopropylmalate) to 3-carboxy-4-methyl-2-oxopentanoate. The product decarboxylates to 4-methyl-2 oxopentanoate. The polypeptide is 3-isopropylmalate dehydrogenase (Rhodospirillum rubrum (strain ATCC 11170 / ATH 1.1.1 / DSM 467 / LMG 4362 / NCIMB 8255 / S1)).